The following is a 553-amino-acid chain: Arginine--tRNA ligase (553 aa).

The 'HIGH' region signature appears at 130 to 140; the sequence is ANPTGDLHIGH.

This sequence belongs to the class-I aminoacyl-tRNA synthetase family. In terms of assembly, monomer.

The protein localises to the cytoplasm. It catalyses the reaction tRNA(Arg) + L-arginine + ATP = L-arginyl-tRNA(Arg) + AMP + diphosphate. This Staphylococcus aureus (strain USA300 / TCH1516) protein is Arginine--tRNA ligase.